Here is a 334-residue protein sequence, read N- to C-terminus: BTB and MATH domain-containing protein 39 (334 aa).

Residues 14-141 (IVTLVFNIYN…EGRFQIEFDL (128 aa)) form the MATH domain. The 66-residue stretch at 164-229 (ADGELITDGK…LQLDSFEVSV (66 aa)) folds into the BTB domain.

The sequence is that of BTB and MATH domain-containing protein 39 (bath-39) from Caenorhabditis elegans.